The chain runs to 430 residues: 3-phosphoshikimate 1-carboxyvinyltransferase (430 aa).

Positions 23, 24, and 28 each coordinate 3-phosphoshikimate. Lys23 lines the phosphoenolpyruvate pocket. Phosphoenolpyruvate is bound by residues Gly93 and Arg121. Positions 166, 168, 313, and 340 each coordinate 3-phosphoshikimate. Gln168 provides a ligand contact to phosphoenolpyruvate. Residue Asp313 is the Proton acceptor of the active site. Phosphoenolpyruvate is bound by residues Arg344 and Arg386.

It belongs to the EPSP synthase family. Monomer.

Its subcellular location is the cytoplasm. It catalyses the reaction 3-phosphoshikimate + phosphoenolpyruvate = 5-O-(1-carboxyvinyl)-3-phosphoshikimate + phosphate. It participates in metabolic intermediate biosynthesis; chorismate biosynthesis; chorismate from D-erythrose 4-phosphate and phosphoenolpyruvate: step 6/7. Catalyzes the transfer of the enolpyruvyl moiety of phosphoenolpyruvate (PEP) to the 5-hydroxyl of shikimate-3-phosphate (S3P) to produce enolpyruvyl shikimate-3-phosphate and inorganic phosphate. The chain is 3-phosphoshikimate 1-carboxyvinyltransferase from Anaeromyxobacter sp. (strain Fw109-5).